The chain runs to 362 residues: Sterol-4-alpha-carboxylate 3-dehydrogenase, decarboxylating (362 aa).

Position 1 is an N-acetylmethionine (methionine 1). Tyrosine 161 serves as the catalytic Proton acceptor. Lysine 165 serves as a coordination point for NAD(+). A helical transmembrane segment spans residues 287–307 (WMAYYLAFLLSLLVMVVSPLI). The short motif at 359–362 (RKDK) is the Prevents secretion from ER element.

The protein belongs to the 3-beta-HSD family. Homodimer.

Its subcellular location is the endoplasmic reticulum membrane. It is found in the lipid droplet. It carries out the reaction a 3beta-hydroxysteroid-4alpha-carboxylate + NADP(+) = a 3-oxosteroid + CO2 + NADPH. It catalyses the reaction a 3beta-hydroxysteroid-4alpha-carboxylate + NAD(+) = a 3-oxosteroid + CO2 + NADH. The catalysed reaction is 4alpha-carboxyzymosterol + NADP(+) = zymosterone + CO2 + NADPH. The enzyme catalyses 4alpha-carboxy-4beta-methyl-5alpha-cholest-8-en-3beta-ol + NADP(+) = 4alpha-methyl-5alpha-cholest-8-en-3-one + CO2 + NADPH. It carries out the reaction 4alpha-carboxy-5alpha-cholest-8-ene-3beta-ol + NADP(+) = 5alpha-cholest-8-en-3-one + CO2 + NADPH. It catalyses the reaction 4beta-methylzymosterol-4alpha-carboxylate + NADP(+) = 3-dehydro-4-methylzymosterol + CO2 + NADPH. The catalysed reaction is 4beta-methylzymosterol-4alpha-carboxylate + NAD(+) = 3-dehydro-4-methylzymosterol + CO2 + NADH. The enzyme catalyses 4alpha-carboxy-5alpha-cholest-8-ene-3beta-ol + NAD(+) = 5alpha-cholest-8-en-3-one + CO2 + NADH. It carries out the reaction 4alpha-carboxy-4beta-methyl-5alpha-cholest-8-en-3beta-ol + NAD(+) = 4alpha-methyl-5alpha-cholest-8-en-3-one + CO2 + NADH. It catalyses the reaction 4alpha-carboxyzymosterol + NAD(+) = zymosterone + CO2 + NADH. The protein operates within steroid biosynthesis; zymosterol biosynthesis; zymosterol from lanosterol: step 4/6. Functionally, catalyzes the NAD(P)(+)-dependent oxidative decarboxylation of the C4 methyl groups of 4-alpha-carboxysterols in post-squalene cholesterol biosynthesis. Plays a role in the regulation of the endocytic trafficking of EGFR. The sequence is that of Sterol-4-alpha-carboxylate 3-dehydrogenase, decarboxylating (Nsdhl) from Mus musculus (Mouse).